The chain runs to 140 residues: FAD synthase (140 aa).

ATP-binding positions include Thr9–Phe10, His14–His17, and Asp92.

This sequence belongs to the archaeal FAD synthase family. In terms of assembly, homodimer. The cofactor is a divalent metal cation.

The catalysed reaction is FMN + ATP + H(+) = FAD + diphosphate. The protein operates within cofactor biosynthesis; FAD biosynthesis; FAD from FMN: step 1/1. Functionally, catalyzes the transfer of the AMP portion of ATP to flavin mononucleotide (FMN) to produce flavin adenine dinucleotide (FAD) coenzyme. This chain is FAD synthase, found in Natronomonas pharaonis (strain ATCC 35678 / DSM 2160 / CIP 103997 / JCM 8858 / NBRC 14720 / NCIMB 2260 / Gabara) (Halobacterium pharaonis).